We begin with the raw amino-acid sequence, 528 residues long: Phosphoenolpyruvate carboxykinase (ATP) (528 aa).

Residues arginine 56, tyrosine 192, and lysine 198 each contribute to the substrate site. Residues lysine 198, histidine 217, and 233–241 each bind ATP; that span reads GLSGTGKTT. Mn(2+)-binding residues include lysine 198 and histidine 217. Position 254 (aspartate 254) interacts with Mn(2+). Residues glutamate 282, arginine 319, and threonine 444 each contribute to the ATP site. Substrate is bound at residue arginine 319.

It belongs to the phosphoenolpyruvate carboxykinase (ATP) family. Mn(2+) serves as cofactor.

The protein localises to the cytoplasm. The enzyme catalyses oxaloacetate + ATP = phosphoenolpyruvate + ADP + CO2. It participates in carbohydrate biosynthesis; gluconeogenesis. Its function is as follows. Involved in the gluconeogenesis. Catalyzes the conversion of oxaloacetate (OAA) to phosphoenolpyruvate (PEP) through direct phosphoryl transfer between the nucleoside triphosphate and OAA. In Bacillus mycoides (strain KBAB4) (Bacillus weihenstephanensis), this protein is Phosphoenolpyruvate carboxykinase (ATP).